A 432-amino-acid polypeptide reads, in one-letter code: Patatin-like phospholipase domain-containing protein 5 (432 aa).

Residues 12–181 form the PNPLA domain; that stretch reads LSFSGSGYMG…SNNLPFSDCP (170 aa). The GXGXXG motif lies at 16-21; sequence GSGYMG. The short motif at 47–51 is the GXSXG element; sequence GSSSG. The Nucleophile role is filled by Ser-49. Residue Asp-168 is the Proton acceptor of the active site. The DGA/G signature appears at 168 to 170; the sequence is DGA. The disordered stretch occupies residues 404–423; that stretch reads ADSGLLRQQRGTAPSGNRPL.

It catalyses the reaction a triacylglycerol + H2O = a diacylglycerol + a fatty acid + H(+). Its function is as follows. Has abundant triacylglycerol lipase activity. In Mus musculus (Mouse), this protein is Patatin-like phospholipase domain-containing protein 5.